The following is a 234-amino-acid chain: Orofacial cleft 1 candidate gene 1 protein homolog (234 aa).

2 disordered regions span residues 1–21 (MEKE…KSKS) and 201–234 (SKHH…WQQR). A compositionally biased stretch (basic residues) spans 202–213 (KHHKEASHHNKK). Residues 223–234 (FKDREASRWQQR) show a composition bias toward basic and acidic residues.

The protein is Orofacial cleft 1 candidate gene 1 protein homolog (OFCC1) of Gallus gallus (Chicken).